Consider the following 452-residue polypeptide: MSSASYLTVKALTKYIKRKFDADPHLREVYVKGELSNVKIHQSGHIYFTLKDDGARIAATMFKAAATKLAFEPKEGMQVFIRGDVNVYEGYGTYQLYVQEMQPDGIGSLFVAFNQLKEQLQKEGLFKLDWKQSIPKFPEKIGVLTSTTGAAIRDICTTLKRRYPLAEILIYPTLVQGAQAAPNIVQNIQRANQDATCQVLIVGRGGGSIEDLWAFNEEIVARAIFESRIPIISAVGHETDTTIADYVSDLRAPTPTAAAEMAVPDQMELFQRVLSQKSQIHQMVRSQLMAERQRLNKLQQSYPLSMPERLYRPFTERLAQLESGLQTAMQVDLMKKSAQLQQLHSTVAQHSPKKALAFHQRELEARMQQLTRAATYYVAKQQQQFEATIRTLEALNPLSILTRGFTVAYKDQHMIKSSTEVQEQDYLTLAFHDGKVVAEVKDILPKNEGESL.

It belongs to the XseA family. As to quaternary structure, heterooligomer composed of large and small subunits.

It is found in the cytoplasm. The catalysed reaction is Exonucleolytic cleavage in either 5'- to 3'- or 3'- to 5'-direction to yield nucleoside 5'-phosphates.. Functionally, bidirectionally degrades single-stranded DNA into large acid-insoluble oligonucleotides, which are then degraded further into small acid-soluble oligonucleotides. This is Exodeoxyribonuclease 7 large subunit from Lysinibacillus sphaericus (strain C3-41).